Here is a 208-residue protein sequence, read N- to C-terminus: Uracil phosphoribosyltransferase (208 aa).

5-phospho-alpha-D-ribose 1-diphosphate is bound by residues Arg78, Arg103, and 130-138 (DPMLATGGS). Uracil contacts are provided by residues Ile193 and 198-200 (GDA). Asp199 provides a ligand contact to 5-phospho-alpha-D-ribose 1-diphosphate.

The protein belongs to the UPRTase family. The cofactor is Mg(2+).

The enzyme catalyses UMP + diphosphate = 5-phospho-alpha-D-ribose 1-diphosphate + uracil. It functions in the pathway pyrimidine metabolism; UMP biosynthesis via salvage pathway; UMP from uracil: step 1/1. With respect to regulation, allosterically activated by GTP. In terms of biological role, catalyzes the conversion of uracil and 5-phospho-alpha-D-ribose 1-diphosphate (PRPP) to UMP and diphosphate. This Yersinia enterocolitica serotype O:8 / biotype 1B (strain NCTC 13174 / 8081) protein is Uracil phosphoribosyltransferase.